The primary structure comprises 109 residues: PRTRRVKRSDGRGNGGTPEEKRPRTAFSGEQLARLKREFAENRYLTERRRQQLSRDLGLNEAQIKIWFQNKRAKIKKASGQKNPLALQLMAQGLYNHSTVPLTKEEEEQ.

Residues 1-31 form a disordered region; the sequence is PRTRRVKRSDGRGNGGTPEEKRPRTAFSGEQ. A DNA-binding region (homeobox) is located at residues 20–79; the sequence is EKRPRTAFSGEQLARLKREFAENRYLTERRRQQLSRDLGLNEAQIKIWFQNKRAKIKKAS.

Belongs to the engrailed homeobox family.

The protein resides in the nucleus. The sequence is that of Homeobox protein E60 from Apis mellifera (Honeybee).